Consider the following 315-residue polypeptide: Putative purine nucleoside phosphorylase (315 aa).

Phosphate is bound by residues Ser-49, His-81, 103 to 105 (RYH), and Ala-135. Glu-220 contacts a purine D-ribonucleoside. Ser-239 contacts phosphate. A purine D-ribonucleoside is bound at residue Asn-262.

Belongs to the PNP/MTAP phosphorylase family.

It is found in the cytoplasm. The protein localises to the nucleus. It carries out the reaction a purine D-ribonucleoside + phosphate = a purine nucleobase + alpha-D-ribose 1-phosphate. It participates in purine metabolism; purine nucleoside salvage. In terms of biological role, the purine nucleoside phosphorylases catalyze the phosphorolytic breakdown of the N-glycosidic bond in the beta-(deoxy)ribonucleoside molecules, with the formation of the corresponding free purine bases and pentose-1-phosphate. Cleaves guanosine and inosine. The polypeptide is Putative purine nucleoside phosphorylase (Schizosaccharomyces pombe (strain 972 / ATCC 24843) (Fission yeast)).